We begin with the raw amino-acid sequence, 289 residues long: Probable protein phosphatase 2C 39 (289 aa).

The PPM-type phosphatase domain occupies 41 to 288 (THGFHLVKGK…DDISVVVVKF (248 aa)). Mn(2+) contacts are provided by D78, G79, D240, and D279.

It belongs to the PP2C family. The cofactor is Mg(2+). Mn(2+) serves as cofactor.

It carries out the reaction O-phospho-L-seryl-[protein] + H2O = L-seryl-[protein] + phosphate. The catalysed reaction is O-phospho-L-threonyl-[protein] + H2O = L-threonyl-[protein] + phosphate. This chain is Probable protein phosphatase 2C 39, found in Arabidopsis thaliana (Mouse-ear cress).